A 150-amino-acid polypeptide reads, in one-letter code: SsrA-binding protein (150 aa).

This sequence belongs to the SmpB family.

It localises to the cytoplasm. In terms of biological role, required for rescue of stalled ribosomes mediated by trans-translation. Binds to transfer-messenger RNA (tmRNA), required for stable association of tmRNA with ribosomes. tmRNA and SmpB together mimic tRNA shape, replacing the anticodon stem-loop with SmpB. tmRNA is encoded by the ssrA gene; the 2 termini fold to resemble tRNA(Ala) and it encodes a 'tag peptide', a short internal open reading frame. During trans-translation Ala-aminoacylated tmRNA acts like a tRNA, entering the A-site of stalled ribosomes, displacing the stalled mRNA. The ribosome then switches to translate the ORF on the tmRNA; the nascent peptide is terminated with the 'tag peptide' encoded by the tmRNA and targeted for degradation. The ribosome is freed to recommence translation, which seems to be the essential function of trans-translation. The protein is SsrA-binding protein of Flavobacterium psychrophilum (strain ATCC 49511 / DSM 21280 / CIP 103535 / JIP02/86).